The following is a 620-amino-acid chain: Chaperone protein HscA homolog (620 aa).

This sequence belongs to the heat shock protein 70 family.

Chaperone involved in the maturation of iron-sulfur cluster-containing proteins. Has a low intrinsic ATPase activity which is markedly stimulated by HscB. This is Chaperone protein HscA homolog from Janthinobacterium sp. (strain Marseille) (Minibacterium massiliensis).